The primary structure comprises 333 residues: tRNA N6-adenosine threonylcarbamoyltransferase (333 aa).

Residues histidine 110 and histidine 114 each coordinate Fe cation. Substrate is bound by residues 133–137 (IVSGG), aspartate 166, glycine 179, aspartate 183, and asparagine 275. Aspartate 302 lines the Fe cation pocket.

The protein belongs to the KAE1 / TsaD family. Fe(2+) is required as a cofactor.

The protein resides in the cytoplasm. The catalysed reaction is L-threonylcarbamoyladenylate + adenosine(37) in tRNA = N(6)-L-threonylcarbamoyladenosine(37) in tRNA + AMP + H(+). Functionally, required for the formation of a threonylcarbamoyl group on adenosine at position 37 (t(6)A37) in tRNAs that read codons beginning with adenine. Is involved in the transfer of the threonylcarbamoyl moiety of threonylcarbamoyl-AMP (TC-AMP) to the N6 group of A37, together with TsaE and TsaB. TsaD likely plays a direct catalytic role in this reaction. This chain is tRNA N6-adenosine threonylcarbamoyltransferase, found in Thermodesulfovibrio yellowstonii (strain ATCC 51303 / DSM 11347 / YP87).